Reading from the N-terminus, the 421-residue chain is 3-isopropylmalate dehydratase large subunit (421 aa).

Cysteine 300, cysteine 360, and cysteine 363 together coordinate [4Fe-4S] cluster.

It belongs to the aconitase/IPM isomerase family. LeuC type 2 subfamily. Heterodimer of LeuC and LeuD. Requires [4Fe-4S] cluster as cofactor.

It carries out the reaction (2R,3S)-3-isopropylmalate = (2S)-2-isopropylmalate. It functions in the pathway amino-acid biosynthesis; L-leucine biosynthesis; L-leucine from 3-methyl-2-oxobutanoate: step 2/4. Its function is as follows. Catalyzes the isomerization between 2-isopropylmalate and 3-isopropylmalate, via the formation of 2-isopropylmaleate. The sequence is that of 3-isopropylmalate dehydratase large subunit from Moorella thermoacetica (strain ATCC 39073 / JCM 9320).